The sequence spans 1308 residues: Limbin (1308 aa).

Residues 1–26 (MDPSGSRGRPTWVLAGGLLAVALALG) form the signal peptide. Over 27–300 (GRGCLGASSR…VLPHHGLHAA (274 aa)) the chain is Extracellular. The tract at residues 36-76 (RPRWRPLGAQPPRDPQVAPRSGPGLRIPPGRSGAGPESSTQ) is disordered. The N-linked (GlcNAc...) asparagine glycan is linked to N220. The helical transmembrane segment at 301 to 321 (GFFIAFLLSLVLTWAALFLMV) threads the bilayer. The Cytoplasmic portion of the chain corresponds to 322–1308 (RYQCLKGNML…KKAMRALGMD (987 aa)). 3 coiled-coil regions span residues 455–578 (TAEC…ELMD), 636–800 (DQME…DRDQ), and 1001–1113 (ASEM…EADT). Positions 784–801 (MAARAEQLEGEERDRDQE) are enriched in basic and acidic residues. The interval 784–816 (MAARAEQLEGEERDRDQEGVQSVRQRLKDDAPE) is disordered.

In terms of assembly, component of the EvC complex composed of EFCAB7, IQCE, EVC2 and EVC; built from two subcomplexes, EVC2:EVC and EFCAB7:IQCE. Interacts with EVC. Interacts (via N-terminal end) with EFCAB7. Interacts (via N-terminal end) with IQCE. Found in the heart, placenta, lung, liver, skeletal muscle, kidney and pancreas.

The protein resides in the cell membrane. It localises to the cytoplasm. The protein localises to the cytoskeleton. It is found in the cilium basal body. Its subcellular location is the cell projection. The protein resides in the cilium. It localises to the cilium membrane. The protein localises to the nucleus. Functionally, component of the EvC complex that positively regulates ciliary Hedgehog (Hh) signaling. Plays a critical role in bone formation and skeletal development. May be involved in early embryonic morphogenesis. The protein is Limbin (EVC2) of Homo sapiens (Human).